Here is a 258-residue protein sequence, read N- to C-terminus: Pyridoxine 5'-phosphate synthase (258 aa).

N6 is a 3-amino-2-oxopropyl phosphate binding site. 8–9 (DH) contributes to the 1-deoxy-D-xylulose 5-phosphate binding site. R17 provides a ligand contact to 3-amino-2-oxopropyl phosphate. The Proton acceptor role is filled by H42. R44 and H49 together coordinate 1-deoxy-D-xylulose 5-phosphate. Residue E69 is the Proton acceptor of the active site. T99 provides a ligand contact to 1-deoxy-D-xylulose 5-phosphate. H213 acts as the Proton donor in catalysis. Residues G214 and 235–236 (GQ) contribute to the 3-amino-2-oxopropyl phosphate site.

This sequence belongs to the PNP synthase family. Homooctamer; tetramer of dimers.

Its subcellular location is the cytoplasm. It catalyses the reaction 3-amino-2-oxopropyl phosphate + 1-deoxy-D-xylulose 5-phosphate = pyridoxine 5'-phosphate + phosphate + 2 H2O + H(+). Its pathway is cofactor biosynthesis; pyridoxine 5'-phosphate biosynthesis; pyridoxine 5'-phosphate from D-erythrose 4-phosphate: step 5/5. Catalyzes the complicated ring closure reaction between the two acyclic compounds 1-deoxy-D-xylulose-5-phosphate (DXP) and 3-amino-2-oxopropyl phosphate (1-amino-acetone-3-phosphate or AAP) to form pyridoxine 5'-phosphate (PNP) and inorganic phosphate. This Sulfurovum sp. (strain NBC37-1) protein is Pyridoxine 5'-phosphate synthase.